The primary structure comprises 147 residues: Sentan (147 aa).

The interval 1–32 is disordered; that stretch reads MGGCMHSTQDKSLHLEGDPNPSAAPTSTCAPR. Over residues 8–17 the composition is skewed to basic and acidic residues; the sequence is TQDKSLHLEG.

The protein belongs to the S-100 family.

It is found in the cell projection. The protein resides in the cilium. Its function is as follows. May be a component of the linker structure that bridges the ciliary membrane and peripheral singlet microtubules. The protein is Sentan (SNTN) of Homo sapiens (Human).